A 459-amino-acid polypeptide reads, in one-letter code: Exodeoxyribonuclease 7 large subunit (459 aa).

Belongs to the XseA family. Heterooligomer composed of large and small subunits.

It localises to the cytoplasm. The catalysed reaction is Exonucleolytic cleavage in either 5'- to 3'- or 3'- to 5'-direction to yield nucleoside 5'-phosphates.. Bidirectionally degrades single-stranded DNA into large acid-insoluble oligonucleotides, which are then degraded further into small acid-soluble oligonucleotides. This is Exodeoxyribonuclease 7 large subunit from Pseudomonas syringae pv. tomato (strain ATCC BAA-871 / DC3000).